Here is a 320-residue protein sequence, read N- to C-terminus: Sucrose operon repressor (320 aa).

The region spanning 1–55 is the HTH lacI-type domain; the sequence is MKNIADIAKIAGVSKSTVSRYLNNGSVSLKTQQKLDEIIRENDYQPNQFAQSLRA. The segment at residues 4–23 is a DNA-binding region (H-T-H motif); the sequence is IADIAKIAGVSKSTVSRYLN.

Functionally, negative regulator of scrB expression. The protein is Sucrose operon repressor (scrR) of Staphylococcus xylosus.